Consider the following 347-residue polypeptide: UPF0284 protein SSO2213 (347 aa).

This sequence belongs to the UPF0284 family.

The sequence is that of UPF0284 protein SSO2213 from Saccharolobus solfataricus (strain ATCC 35092 / DSM 1617 / JCM 11322 / P2) (Sulfolobus solfataricus).